The sequence spans 440 residues: Chromosome partition protein MukF (440 aa).

The interval 208 to 236 (LSETSGTLRELQDTLEAAGDKLQANLLRI) is leucine-zipper.

This sequence belongs to the MukF family. Interacts, and probably forms a ternary complex, with MukE and MukB via its C-terminal region. The complex formation is stimulated by calcium or magnesium. It is required for an interaction between MukE and MukB.

It localises to the cytoplasm. The protein localises to the nucleoid. Its function is as follows. Involved in chromosome condensation, segregation and cell cycle progression. May participate in facilitating chromosome segregation by condensation DNA from both sides of a centrally located replisome during cell division. Not required for mini-F plasmid partitioning. Probably acts via its interaction with MukB and MukE. Overexpression results in anucleate cells. It has a calcium binding activity. The polypeptide is Chromosome partition protein MukF (Salmonella gallinarum (strain 287/91 / NCTC 13346)).